Consider the following 338-residue polypeptide: NADPH dehydrogenase (338 aa).

FMN is bound at residue 22 to 25; that stretch reads SPMC. A substrate-binding site is contributed by Tyr27. The FMN site is built by Ala59 and Gln101. Position 163–166 (163–166) interacts with substrate; that stretch reads HAAH. FMN-binding positions include Arg214 and 306–307; that span reads GR.

It belongs to the NADH:flavin oxidoreductase/NADH oxidase family. NamA subfamily. As to quaternary structure, homotetramer. Requires FMN as cofactor.

The enzyme catalyses A + NADPH + H(+) = AH2 + NADP(+). In terms of biological role, catalyzes the reduction of the double bond of an array of alpha,beta-unsaturated aldehydes and ketones. It also reduces the nitro group of nitroester and nitroaromatic compounds. It could have a role in detoxification processes. The protein is NADPH dehydrogenase of Listeria monocytogenes serotype 4b (strain CLIP80459).